The primary structure comprises 152 residues: Large ribosomal subunit protein bL9 (152 aa).

It belongs to the bacterial ribosomal protein bL9 family.

In terms of biological role, binds to the 23S rRNA. The chain is Large ribosomal subunit protein bL9 from Synechococcus sp. (strain WH7803).